The primary structure comprises 414 residues: STAGA complex 65 subunit gamma (414 aa).

The disordered stretch occupies residues 87–108 (NQQQTEGVKTEESEPLPSCPGS). Position 108 is a phosphoserine (serine 108). Residue lysine 271 forms a Glycyl lysine isopeptide (Lys-Gly) (interchain with G-Cter in SUMO2) linkage. 2 positions are modified to phosphoserine: serine 323 and serine 334. A disordered region spans residues 346–414 (PQESEEGNVS…QRCKKRMRKI (69 aa)). Positions 386 to 395 (SSYGSHSTDS) are enriched in low complexity.

In terms of assembly, component of the STAGA transcription coactivator-HAT complex, at least composed of SUPT3H, SUPT7L, GCN5L2, TAF5L, TAF6L, TADA3L, TAD1L, TAF10, TAF12 and TAF9. In terms of processing, sumoylated. As to expression, expressed at high levels in adenocarcinomas and gliomas and low in esophageal cancers and malignant hematological disease. Also expressed at high level in the thymus, low in peripheral blood mononuclear cells, and lowest in the stomach, small intestine, and skeletal muscle.

It localises to the nucleus. The protein is STAGA complex 65 subunit gamma (SUPT7L) of Homo sapiens (Human).